The primary structure comprises 616 residues: TAF6-like RNA polymerase II p300/CBP-associated factor-associated factor 65 kDa subunit 6L (616 aa).

Disordered regions lie at residues 399–432 (SLLL…EDPS) and 455–539 (FGTG…GTRD). Phosphoserine is present on residues S494 and S500. R549, R555, and R587 each carry asymmetric dimethylarginine.

It belongs to the TAF6 family. The PCAF complex is composed of a number of TBP-associated factors (TAFS), such as TAF5, TAF5L, TAF6, TAF6L, TAF9, TAF10 and TAF12, PCAF, and also PCAF-associated factors (PAFs), such as TADA2L/ADA2, TADA3L/ADA3 and SPT3. Component of the STAGA transcription coactivator-HAT complex, at least composed of SUPT3H, GCN5L2, TAF5L, TAF6L, SUPT7L, TADA3L, TAD1L, TAF10, TAF12, TRRAP and TAF9.

The protein localises to the nucleus. Its function is as follows. Functions as a component of the PCAF complex. The PCAF complex is capable of efficiently acetylating histones in a nucleosomal context. The PCAF complex could be considered as the human version of the yeast SAGA complex. With TAF5L, acts as an epigenetic regulator essential for somatic reprogramming. Regulates target genes through H3K9ac deposition and MYC recruitment which trigger MYC regulatory network to orchestrate gene expression programs to control embryonic stem cell state. Functions with MYC to activate target gene expression through RNA polymerase II pause release. The polypeptide is TAF6-like RNA polymerase II p300/CBP-associated factor-associated factor 65 kDa subunit 6L (Mus musculus (Mouse)).